Here is a 102-residue protein sequence, read N- to C-terminus: NADH-quinone oxidoreductase subunit K (102 aa).

3 helical membrane-spanning segments follow: residues 5–25 (LGHY…GIFL), 31–51 (IVLL…FVAF), and 62–82 (VFVF…LAIL).

This sequence belongs to the complex I subunit 4L family. In terms of assembly, NDH-1 is composed of 14 different subunits. Subunits NuoA, H, J, K, L, M, N constitute the membrane sector of the complex.

It localises to the cell inner membrane. The catalysed reaction is a quinone + NADH + 5 H(+)(in) = a quinol + NAD(+) + 4 H(+)(out). Functionally, NDH-1 shuttles electrons from NADH, via FMN and iron-sulfur (Fe-S) centers, to quinones in the respiratory chain. The immediate electron acceptor for the enzyme in this species is believed to be ubiquinone. Couples the redox reaction to proton translocation (for every two electrons transferred, four hydrogen ions are translocated across the cytoplasmic membrane), and thus conserves the redox energy in a proton gradient. The polypeptide is NADH-quinone oxidoreductase subunit K (Methylibium petroleiphilum (strain ATCC BAA-1232 / LMG 22953 / PM1)).